The chain runs to 208 residues: Outer-membrane lipoprotein carrier protein (208 aa).

Residues 1–21 form the signal peptide; that stretch reads MKRTATLLVVALILALNTAQA.

This sequence belongs to the LolA family. Monomer.

The protein localises to the periplasm. Its function is as follows. Participates in the translocation of lipoproteins from the inner membrane to the outer membrane. Only forms a complex with a lipoprotein if the residue after the N-terminal Cys is not an aspartate (The Asp acts as a targeting signal to indicate that the lipoprotein should stay in the inner membrane). The polypeptide is Outer-membrane lipoprotein carrier protein (Halorhodospira halophila (strain DSM 244 / SL1) (Ectothiorhodospira halophila (strain DSM 244 / SL1))).